A 283-amino-acid chain; its full sequence is Pantothenate synthetase (283 aa).

30–37 (MGALHEGH) provides a ligand contact to ATP. Residue His-37 is the Proton donor of the active site. (R)-pantoate is bound at residue Gln-61. Gln-61 contributes to the beta-alanine binding site. 147 to 150 (GEKD) contacts ATP. Gln-153 lines the (R)-pantoate pocket. Residues Ile-176 and 184 to 187 (VSSR) contribute to the ATP site.

Belongs to the pantothenate synthetase family. As to quaternary structure, homodimer.

The protein localises to the cytoplasm. It catalyses the reaction (R)-pantoate + beta-alanine + ATP = (R)-pantothenate + AMP + diphosphate + H(+). It participates in cofactor biosynthesis; (R)-pantothenate biosynthesis; (R)-pantothenate from (R)-pantoate and beta-alanine: step 1/1. Its function is as follows. Catalyzes the condensation of pantoate with beta-alanine in an ATP-dependent reaction via a pantoyl-adenylate intermediate. In Chlorobium phaeobacteroides (strain DSM 266 / SMG 266 / 2430), this protein is Pantothenate synthetase.